The chain runs to 266 residues: Probable dihydroorotate dehydrogenase B (NAD(+)), electron transfer subunit (266 aa).

Residues 5 to 99 (NVPEVLEIKR…RGPYGRGFEL (95 aa)) form the FAD-binding FR-type domain. C217, C222, C225, and C235 together coordinate [2Fe-2S] cluster.

Belongs to the PyrK family. Heterotetramer of 2 PyrK and 2 PyrD type B subunits. It depends on [2Fe-2S] cluster as a cofactor. FAD serves as cofactor.

The protein operates within pyrimidine metabolism; UMP biosynthesis via de novo pathway; orotate from (S)-dihydroorotate (NAD(+) route): step 1/1. Its function is as follows. Responsible for channeling the electrons from the oxidation of dihydroorotate from the FMN redox center in the PyrD type B subunit to the ultimate electron acceptor NAD(+). The sequence is that of Probable dihydroorotate dehydrogenase B (NAD(+)), electron transfer subunit from Methanothermobacter thermautotrophicus (strain ATCC 29096 / DSM 1053 / JCM 10044 / NBRC 100330 / Delta H) (Methanobacterium thermoautotrophicum).